Reading from the N-terminus, the 194-residue chain is Fe/S biogenesis protein NfuA (194 aa).

[4Fe-4S] cluster contacts are provided by Cys152 and Cys155.

Belongs to the NfuA family. In terms of assembly, homodimer. [4Fe-4S] cluster serves as cofactor.

Functionally, involved in iron-sulfur cluster biogenesis. Binds a 4Fe-4S cluster, can transfer this cluster to apoproteins, and thereby intervenes in the maturation of Fe/S proteins. Could also act as a scaffold/chaperone for damaged Fe/S proteins. The chain is Fe/S biogenesis protein NfuA from Stutzerimonas stutzeri (strain A1501) (Pseudomonas stutzeri).